Here is a 226-residue protein sequence, read N- to C-terminus: MLTWLSRTDFDFPPLDKALQEPNGLLAAGGDLNPQRLVAAYRHGCFPWYQDGQPILWWSPDPRTVLFPDELHVSRSLAKCLRQQRFEVTFNRDFRAVIQACAAPRDYADGTWITTPMQLAYQELHLRGIAHSVEVWQERQLVGGLYGLAMGRLFFGESMFSRADNASKVGFVTLVRHLRDAGFVLIDCQMPTRHLHSLGARAISRGEFADYLQRYRDQPPTGDLDF.

The protein belongs to the L/F-transferase family.

It is found in the cytoplasm. The enzyme catalyses N-terminal L-lysyl-[protein] + L-leucyl-tRNA(Leu) = N-terminal L-leucyl-L-lysyl-[protein] + tRNA(Leu) + H(+). The catalysed reaction is N-terminal L-arginyl-[protein] + L-leucyl-tRNA(Leu) = N-terminal L-leucyl-L-arginyl-[protein] + tRNA(Leu) + H(+). It carries out the reaction L-phenylalanyl-tRNA(Phe) + an N-terminal L-alpha-aminoacyl-[protein] = an N-terminal L-phenylalanyl-L-alpha-aminoacyl-[protein] + tRNA(Phe). In terms of biological role, functions in the N-end rule pathway of protein degradation where it conjugates Leu, Phe and, less efficiently, Met from aminoacyl-tRNAs to the N-termini of proteins containing an N-terminal arginine or lysine. The chain is Leucyl/phenylalanyl-tRNA--protein transferase from Pseudomonas aeruginosa (strain LESB58).